We begin with the raw amino-acid sequence, 350 residues long: Ion-translocating oxidoreductase complex subunit D (350 aa).

Helical transmembrane passes span 20–40, 42–62, 89–109, and 120–140; these read VMLW…LFFG, GNLI…AAFL, LPQF…IVVA, and PFNP…VAMT. T178 is subject to FMN phosphoryl threonine. A run of 5 helical transmembrane segments spans residues 204–224, 228–248, 255–275, 282–302, and 306–326; these read LIAR…VLLI, IITW…SLAF, YAPL…FFIA, ATSH…VYLI, and GNYP…VPFI.

It belongs to the NqrB/RnfD family. In terms of assembly, the complex is composed of six subunits: RnfA, RnfB, RnfC, RnfD, RnfE and RnfG. It depends on FMN as a cofactor.

It localises to the cell inner membrane. Part of a membrane-bound complex that couples electron transfer with translocation of ions across the membrane. The chain is Ion-translocating oxidoreductase complex subunit D from Marinobacter nauticus (strain ATCC 700491 / DSM 11845 / VT8) (Marinobacter aquaeolei).